We begin with the raw amino-acid sequence, 91 residues long: UPF0512 protein E (91 aa).

Low complexity predominate over residues 1 to 25 (MAIFKSISSISNSTSAMGSSNSTSN). A disordered region spans residues 1–26 (MAIFKSISSISNSTSAMGSSNSTSNR).

The protein belongs to the UPF0512 family.

This Dictyostelium discoideum (Social amoeba) protein is UPF0512 protein E.